We begin with the raw amino-acid sequence, 217 residues long: Adenylate kinase (217 aa).

Position 10 to 15 (10 to 15 (GAGKGT)) interacts with ATP. The tract at residues 30-59 (STGDIFRSNIKNGTELGRKAKEYIDKGLLV) is NMP. AMP contacts are provided by residues T31, R36, 57-59 (LLV), 85-88 (GFPR), and Q92. Positions 126 to 163 (GRRVCSKCGMSYHIVYNQPKVENICDSCNGELIQRDDD) are LID. An ATP-binding site is contributed by R127. 2 residues coordinate Zn(2+): C130 and C133. 136–137 (SY) contributes to the ATP binding site. Zn(2+) contacts are provided by C150 and C153. Residues R160 and R171 each coordinate AMP. Residue E199 coordinates ATP.

It belongs to the adenylate kinase family. Monomer.

The protein localises to the cytoplasm. The enzyme catalyses AMP + ATP = 2 ADP. Its pathway is purine metabolism; AMP biosynthesis via salvage pathway; AMP from ADP: step 1/1. In terms of biological role, catalyzes the reversible transfer of the terminal phosphate group between ATP and AMP. Plays an important role in cellular energy homeostasis and in adenine nucleotide metabolism. This chain is Adenylate kinase, found in Acetivibrio thermocellus (strain ATCC 27405 / DSM 1237 / JCM 9322 / NBRC 103400 / NCIMB 10682 / NRRL B-4536 / VPI 7372) (Clostridium thermocellum).